The chain runs to 232 residues: Phosphatidylserine decarboxylase proenzyme (232 aa).

Ser190 (schiff-base intermediate with substrate; via pyruvic acid) is an active-site residue. Pyruvic acid (Ser); by autocatalysis is present on Ser190.

The protein belongs to the phosphatidylserine decarboxylase family. PSD-A subfamily. Heterodimer of a large membrane-associated beta subunit and a small pyruvoyl-containing alpha subunit. Pyruvate is required as a cofactor. Post-translationally, is synthesized initially as an inactive proenzyme. Formation of the active enzyme involves a self-maturation process in which the active site pyruvoyl group is generated from an internal serine residue via an autocatalytic post-translational modification. Two non-identical subunits are generated from the proenzyme in this reaction, and the pyruvate is formed at the N-terminus of the alpha chain, which is derived from the carboxyl end of the proenzyme. The post-translation cleavage follows an unusual pathway, termed non-hydrolytic serinolysis, in which the side chain hydroxyl group of the serine supplies its oxygen atom to form the C-terminus of the beta chain, while the remainder of the serine residue undergoes an oxidative deamination to produce ammonia and the pyruvoyl prosthetic group on the alpha chain.

It is found in the cell membrane. The catalysed reaction is a 1,2-diacyl-sn-glycero-3-phospho-L-serine + H(+) = a 1,2-diacyl-sn-glycero-3-phosphoethanolamine + CO2. It participates in phospholipid metabolism; phosphatidylethanolamine biosynthesis; phosphatidylethanolamine from CDP-diacylglycerol: step 2/2. Its function is as follows. Catalyzes the formation of phosphatidylethanolamine (PtdEtn) from phosphatidylserine (PtdSer). The polypeptide is Phosphatidylserine decarboxylase proenzyme (Rhodopseudomonas palustris (strain BisB5)).